The primary structure comprises 249 residues: Orotidine 5'-phosphate decarboxylase (249 aa).

Residues D21, K43, 72–81, T128, R193, Q204, G224, and R225 each bind substrate; that span reads DLKLYDIPET. K74 serves as the catalytic Proton donor.

The protein belongs to the OMP decarboxylase family. Type 1 subfamily. As to quaternary structure, homodimer.

The enzyme catalyses orotidine 5'-phosphate + H(+) = UMP + CO2. It functions in the pathway pyrimidine metabolism; UMP biosynthesis via de novo pathway; UMP from orotate: step 2/2. Catalyzes the decarboxylation of orotidine 5'-monophosphate (OMP) to uridine 5'-monophosphate (UMP). The polypeptide is Orotidine 5'-phosphate decarboxylase (Desulfosudis oleivorans (strain DSM 6200 / JCM 39069 / Hxd3) (Desulfococcus oleovorans)).